Here is a 483-residue protein sequence, read N- to C-terminus: Protein FIZZY-RELATED 2 (483 aa).

The tract at residues 1–28 is disordered; that stretch reads MEEEDPTASNVITNSNSSSMRNLSPAMN. The segment covering 7–28 has biased composition (polar residues); sequence TASNVITNSNSSSMRNLSPAMN. WD repeat units lie at residues 174–211, 215–254, 257–294, 298–337, 340–382, 384–425, and 428–467; these read QDDF…VTKL, GAED…RTRT, GHRL…DHVS, GHKS…PVLK, EHTA…HLSS, DTCS…KIAT, and GHTY…KSQN.

The protein belongs to the WD repeat CDC20/Fizzy family. In terms of assembly, associates with the APC/C complex. Interacts with CDC20-1, CDC20-2, CYCA1-1, CYCA1-2, CYCA3-4, CYCB1-1 and CYCB1-2. Binds to GIG1 and PYM. In terms of tissue distribution, expressed in seedlings, flowers, leaves and roots. Expressed in the differentiating cell files of the root elongation zone.

Its subcellular location is the nucleus. It participates in protein modification; protein ubiquitination. Activator protein that regulates the ubiquitin ligase activity and substrate specificity of the anaphase promoting complex/cyclosome (APC/C). Necessary and sufficient for endoreduplication and correct cell expansion. Controls meristem size by stimulating endoreduplication in the elongation zone. The chain is Protein FIZZY-RELATED 2 (FZR2) from Arabidopsis thaliana (Mouse-ear cress).